The following is a 267-amino-acid chain: MSDNLSARWHRILDMTNRETSDDVVIARSSFDDFSQSTPWRKFEISCGNRSFFVNPGWLAELSPYFADELYVRKPNVQRYVIDQATPDEVLEFLRCITFCPMRKPLTVKNVSLVLTFANRFEMRPVQARCENFIAQNATSLSRDKTKLFQFFPLQVTCAMSQCDPNSSTMSVLVDKLAGIKDDELSRLHFAEMPGDVVAEVYAQKIQRTKDKKAQRQAGASDETAAGCCFMQWASSLFNRRRQRNQADQSILPPSGDQQHHRSELHA.

Residues 244-267 (RNQADQSILPPSGDQQHHRSELHA) are disordered. Residues 258 to 267 (QQHHRSELHA) show a composition bias toward basic and acidic residues.

The polypeptide is Cytokinesis defective protein 7 (Caenorhabditis elegans).